Here is a 601-residue protein sequence, read N- to C-terminus: MSRFKRGAHVDSGAGFRQEKEDCPVPYGLLKAARKSGQLNLSGRGLTEVPASVWRLNLDTPQEAKQNVSFGAEDRWWEQTDLTKLLLSSNKLQSIPDDVKLLPALVVLDIHDNQLSSLPDSIGDLEQLQKLILSHNKLTELPSGVWRLTNLRCLHLQQNLIEQIPRDLGQLVNLDELDLSNNHLIDIPESLANLQNLVKLDLSCNKLKSLPPAISQMKNLRMLDCSRNQMESIPPVLAQMESLEQLYLRHNKLRYLPELPCCKTLKELHCGNNQIEVLEAEHLKHLNALSLLELRDNKVKSLPEEITLLQGLERLDLTNNDISSLPCGLGTLPKLKSLSLEGNPLRAIRRDLLTKGTGELLKYLRSRVQEPPNGGLKEEPKTAMTFPSQAKINVHAIKTLKTLDYSEKQDATIPDDVFDAVDGNPVANVNFSKNQLTAVPHRIVDLKDSLADINLGFNKLTTIPADFCHLKQLMHIDLRNNLLISLPMELEGLIKLRSVILSFNRFKSFPEVLYRIPSLETILISSNQVGGIDAVQMKTLSRLSTLDLSNNDIMQVPPELGNCTSLRALMLDGNPFRNPRAAILIKGTDAVLEYLRSRIPT.

LRR repeat units lie at residues 33–56, 79–101, 102–124, 125–148, 150–170, 171–193, 194–217, 219–239, 240–264, 266–285, 286–308, 309–334, 336–355, 397–420, 423–446, 447–469, 470–492, 493–516, 518–539, 540–563, and 565–586; these read ARKS…VWRL, QTDL…DVKL, LPAL…SIGD, LEQL…VWRL, NLRC…DLGQ, LVNL…SLAN, LQNL…ISQM, NLRM…VLAQ, MESL…CCKT, KELH…HLKH, LNAL…EITL, LQGL…TLPK, KSLS…LLTK, IKTL…VFDA, GNPV…IVDL, KDSL…DFCH, LKQL…ELEG, LIKL…LYRI, SLET…QMKT, LSRL…LGNC, and SLRA…ILIK.

This is Leucine-rich repeat-containing protein 40 (lrrc40) from Danio rerio (Zebrafish).